Reading from the N-terminus, the 531-residue chain is Coiled-coil domain-containing protein 9 (531 aa).

Positions 40 to 531 (EDRKKAELEG…PGEAWPFESV (492 aa)) are disordered. Basic and acidic residues predominate over residues 59–72 (RSVEKENVAVESEK). Residue S80 is modified to Phosphoserine. T95 carries the post-translational modification Phosphothreonine. The residue at position 107 (R107) is an Omega-N-methylarginine. S111 carries the phosphoserine modification. An omega-N-methylarginine mark is found at R121, R128, and R130. 3 positions are modified to asymmetric dimethylarginine: R131, R133, and R135. Residue S137 is modified to Phosphoserine. Basic and acidic residues-rich tracts occupy residues 148 to 185 (ISDR…REGV), 194 to 217 (FLDD…EESR), and 227 to 241 (DFER…ERQG). The stretch at 149 to 185 (SDRKSKEWEERRRQNIEKMNEEMEKIAEYERNQREGV) forms a coiled coil. Phosphoserine is present on S202. S248 and S255 each carry phosphoserine. Composition is skewed to basic and acidic residues over residues 258 to 279 (GRER…QERL), 289 to 302 (WRRE…DGMF), 311 to 320 (EPSHRYDDQA), and 361 to 372 (YSDHDDRWETKE). Residues S376, S386, and S390 each carry the phosphoserine modification. Residues 386–395 (SPETSPKETP) show a composition bias toward low complexity. A compositionally biased stretch (pro residues) spans 396–406 (MQPPEIPAPAH). Positions 411-446 (DEGEENEGEEDEEWEDISEDEEEEEIEVEEGDEEEP) are enriched in acidic residues. The residue at position 521 (S521) is a Phosphoserine.

In terms of assembly, probable component of the exon junction complex (EJC); the association is RNA-dependent.

Probable component of the exon junction complex (EJC), a multiprotein complex that associates immediately upstream of the exon-exon junction on mRNAs and serves as a positional landmark for the intron exon structure of genes and directs post-transcriptional processes in the cytoplasm such as mRNA export, nonsense-mediated mRNA decay (NMD) or translation. The chain is Coiled-coil domain-containing protein 9 from Homo sapiens (Human).